The following is a 162-amino-acid chain: Ribonuclease P protein component (162 aa).

The interval 1–67 is disordered; sequence MDEKDLAAQP…GGKLVSLKGD (67 aa). Over residues 21-31 the composition is skewed to basic and acidic residues; sequence GPHEDPRRQEG.

The protein belongs to the RnpA family. As to quaternary structure, consists of a catalytic RNA component (M1 or rnpB) and a protein subunit.

It catalyses the reaction Endonucleolytic cleavage of RNA, removing 5'-extranucleotides from tRNA precursor.. Functionally, RNaseP catalyzes the removal of the 5'-leader sequence from pre-tRNA to produce the mature 5'-terminus. It can also cleave other RNA substrates such as 4.5S RNA. The protein component plays an auxiliary but essential role in vivo by binding to the 5'-leader sequence and broadening the substrate specificity of the ribozyme. The polypeptide is Ribonuclease P protein component (Thermus brockianus).